An 87-amino-acid polypeptide reads, in one-letter code: MAGTSLGTRFYRQIKRHPGLIPMIGFICLGMGSAGLYLLRLALRSPDVCWDRKNNPEPWNRLSPNDQYKFLAVSTDYKKLKKDRPDF.

Belongs to the complex I NDUFA4 subunit family.

This is NADH dehydrogenase [ubiquinone] 1 alpha subcomplex subunit 4-like 2 (Ndufa4l2) from Mus musculus (Mouse).